Reading from the N-terminus, the 846-residue chain is Aminopeptidase N (846 aa).

Residues E120 and 252–256 each bind substrate; that span reads GAMEN. H288 contributes to the Zn(2+) binding site. The active-site Proton acceptor is E289. Zn(2+) contacts are provided by H292 and E311.

This sequence belongs to the peptidase M1 family. In terms of assembly, monomer. Requires Zn(2+) as cofactor.

The protein resides in the cytoplasm. It catalyses the reaction Release of an N-terminal amino acid, Xaa-|-Yaa- from a peptide, amide or arylamide. Xaa is preferably Ala, but may be most amino acids including Pro (slow action). When a terminal hydrophobic residue is followed by a prolyl residue, the two may be released as an intact Xaa-Pro dipeptide.. In terms of biological role, aminopeptidase with broad substrate specificity to several peptides. It has more affinity for oligopeptides than for dipeptides. It plays an essential role in the metabolism, it may be involved in nitrogen supply or protein turnover. The protein is Aminopeptidase N (pepN) of Lactococcus lactis subsp. cremoris (Streptococcus cremoris).